A 255-amino-acid polypeptide reads, in one-letter code: Protein patched homolog 2 (255 aa).

Topologically, residues 1-197 (SLLQGGSAYL…LNDIMKSFSD (197 aa)) are extracellular. 2 N-linked (GlcNAc...) asparagine glycosylation sites follow: N147 and N175. Residues 198 to 218 (VSVIRVAGGYLLMLAYACVTM) form a helical membrane-spanning segment. The SSD domain maps to 199–255 (SVIRVAGGYLLMLAYACVTMLRWDCTKSQGAVGLAGVLLVALSVASGLGLCSLLGIS). Topologically, residues 219-227 (LRWDCTKSQ) are cytoplasmic. A helical membrane pass occupies residues 228–248 (GAVGLAGVLLVALSVASGLGL). Residues 249-255 (CSLLGIS) are Extracellular-facing.

It belongs to the patched family. In terms of tissue distribution, in the eye, detected in neural retina, iris, retinal pigment epithelium, but not in lens.

The protein resides in the membrane. Its function is as follows. May act as a receptor for sonic hedgehog (SHH). The chain is Protein patched homolog 2 (PTC2) from Cynops pyrrhogaster (Japanese fire-bellied newt).